We begin with the raw amino-acid sequence, 544 residues long: MSDSLDNEEKPPAPPLRMNSNNRDSSALNHSSKPLPMAPEEKNKKARLRSIFPGGGDKTNKKKEKERPEISLPSDFEHTIHVGFDAVTGEFTGIPEQWARLLQTSNITKLEQKKNPQAVLDVLKFYDSKETVNNQKYMSFTSGDKSAHGYIAAHQSNTKTASEPPLAPPVSEEEDEEEEEEEDDNEPPPVIAPRPEHTKSIYTRSVVESIASPAAPNKEATPPSAENANSSTLYRNTDRQRKKSKMTDEEILEKLRSIVSVGDPKKKYTRFEKIGQGASGTVYTALDIATGQEVAIKQMNLQQQPKKELIINEILVMRENKNPNIVNYLDSYLVGDELWVVMEYLAGGSLTDVVTETCMDEGQIAAVCRECLQALDFLHSNQVIHRDIKSDNILLGMDGSVKLTDFGFCAQITPEQSKRSTMVGTPYWMAPEVVTRKAYGPKVDIWSLGIMAIEMVEGEPPYLNENPLRALYLIATNGTPELQNPERLSAVFRDFLNRCLEMDVDRRGSAKELLQHPFLKLAKPLSSLTPLILAAKEAIKNSSR.

The disordered stretch occupies residues 1-73; it reads MSDSLDNEEK…EKERPEISLP (73 aa). Phosphoserine is present on residues serine 2 and serine 4. Over residues 18 to 32 the composition is skewed to polar residues; that stretch reads MNSNNRDSSALNHSS. The residue at position 50 (serine 50) is a Phosphoserine; by autocatalysis. The segment covering 63-73 has biased composition (basic and acidic residues); it reads KEKERPEISLP. The segment at 65–108 is GTPase-binding; it reads KERPEISLPSDFEHTIHVGFDAVTGEFTGIPEQWARLLQTSNIT. The interval 65–135 is autoregulatory region; it reads KERPEISLPS…YDSKETVNNQ (71 aa). A CRIB domain is found at 70–83; it reads ISLPSDFEHTIHVG. The linker stretch occupies residues 84–267; it reads FDAVTGEFTG…IVSVGDPKKK (184 aa). Serine 139 is subject to Phosphoserine; by autocatalysis. 2 disordered regions span residues 156–197 and 213–248; these read SNTK…RPEH and PAAPNKEATPPSAENANSSTLYRNTDRQRKKSKMTD. Serine 171 carries the phosphoserine modification. Acidic residues predominate over residues 171 to 186; that stretch reads SEEEDEEEEEEEDDNE. Polar residues predominate over residues 224-235; it reads SAENANSSTLYR. The Protein kinase domain maps to 268-519; the sequence is YTRFEKIGQG…AKELLQHPFL (252 aa). Residues 274 to 282 and lysine 297 each bind ATP; that span reads IGQGASGTV. Aspartate 387 functions as the Proton acceptor in the catalytic mechanism. Threonine 421 carries the post-translational modification Phosphothreonine; by autocatalysis.

Belongs to the protein kinase superfamily. STE Ser/Thr protein kinase family. STE20 subfamily. In terms of assembly, interacts tightly with GTP-bound but not GDP-bound CDC42/p21 and RAC1. Shows highly specific binding to the SH3 domains of phospholipase C-gamma and of adapter protein NCK. Interacts with the C-terminal of APP. Interacts with ARHGEF6 and ARHGEF7. Interacts with GIT1 and GIT2. The cofactor is Mg(2+). Autophosphorylated when activated by CDC42/p21. In terms of processing, neddylated. Detected at high levels in the brain and at low levels in the testis.

It is found in the cytoplasm. The enzyme catalyses L-seryl-[protein] + ATP = O-phospho-L-seryl-[protein] + ADP + H(+). The catalysed reaction is L-threonyl-[protein] + ATP = O-phospho-L-threonyl-[protein] + ADP + H(+). Activated by binding small G proteins. Binding of GTP-bound CDC42 or RAC1 to the autoregulatory region releases monomers from the autoinhibited dimer, enables phosphorylation of Thr-421 and allows the kinase domain to adopt an active structure. Its function is as follows. Serine/threonine protein kinase that plays a role in a variety of different signaling pathways including cytoskeleton regulation, cell migration, or cell cycle regulation. Plays a role in dendrite spine morphogenesis as well as synapse formation and plasticity. Acts as a downstream effector of the small GTPases CDC42 and RAC1. Activation by the binding of active CDC42 and RAC1 results in a conformational change and a subsequent autophosphorylation on several serine and/or threonine residues. Phosphorylates MAPK4 and MAPK6 and activates the downstream target MAPKAPK5, a regulator of F-actin polymerization and cell migration. Additionally, phosphorylates TNNI3/troponin I to modulate calcium sensitivity and relaxation kinetics of thin myofilaments. May also be involved in early neuronal development. In hippocampal neurons, necessary for the formation of dendritic spines and excitatory synapses; this function is dependent on kinase activity and may be exerted by the regulation of actomyosin contractility through the phosphorylation of myosin II regulatory light chain (MLC). In Rattus norvegicus (Rat), this protein is Serine/threonine-protein kinase PAK 3 (Pak3).